The following is a 426-amino-acid chain: 3-phosphoshikimate 1-carboxyvinyltransferase (426 aa).

Residues Lys22, Ser23, and Arg27 each contribute to the 3-phosphoshikimate site. Lys22 lines the phosphoenolpyruvate pocket. Phosphoenolpyruvate contacts are provided by Gly96 and Arg124. Residues Ser170, Ser171, Gln172, Ser198, Asp314, Asn337, and Lys341 each coordinate 3-phosphoshikimate. Gln172 serves as a coordination point for phosphoenolpyruvate. The Proton acceptor role is filled by Asp314. Phosphoenolpyruvate is bound by residues Arg345, Arg387, and Lys412.

The protein belongs to the EPSP synthase family. As to quaternary structure, monomer.

The protein resides in the cytoplasm. It carries out the reaction 3-phosphoshikimate + phosphoenolpyruvate = 5-O-(1-carboxyvinyl)-3-phosphoshikimate + phosphate. It participates in metabolic intermediate biosynthesis; chorismate biosynthesis; chorismate from D-erythrose 4-phosphate and phosphoenolpyruvate: step 6/7. Its function is as follows. Catalyzes the transfer of the enolpyruvyl moiety of phosphoenolpyruvate (PEP) to the 5-hydroxyl of shikimate-3-phosphate (S3P) to produce enolpyruvyl shikimate-3-phosphate and inorganic phosphate. The sequence is that of 3-phosphoshikimate 1-carboxyvinyltransferase from Shewanella sp. (strain ANA-3).